A 149-amino-acid polypeptide reads, in one-letter code: Large ribosomal subunit protein uL13 (149 aa).

It belongs to the universal ribosomal protein uL13 family. Part of the 50S ribosomal subunit.

Its function is as follows. This protein is one of the early assembly proteins of the 50S ribosomal subunit, although it is not seen to bind rRNA by itself. It is important during the early stages of 50S assembly. This is Large ribosomal subunit protein uL13 from Bifidobacterium adolescentis (strain ATCC 15703 / DSM 20083 / NCTC 11814 / E194a).